The sequence spans 483 residues: Phloretin 2'-O-glucosyltransferase (483 aa).

The Proton acceptor role is filled by histidine 15. Position 15 (histidine 15) interacts with an anthocyanidin. Aspartate 118 functions as the Charge relay in the catalytic mechanism. UDP-alpha-D-glucose is bound by residues threonine 140, alanine 360, glutamine 362, histidine 377, tryptophan 380, asparagine 381, serine 382, and glutamate 385. An anthocyanidin is bound at residue alanine 400. 2 residues coordinate UDP-alpha-D-glucose: glutamate 401 and glutamine 402.

Belongs to the UDP-glycosyltransferase family.

It catalyses the reaction phloretin + UDP-alpha-D-glucose = phlorizin + UDP + H(+). Functionally, glycosyltransferase that possesses phloretin 2'-O-glycosyltransferase activity. Converts phloretin to phlorizin (phloretin 2'-O-glucoside), a potent antioxidant. Is specific for phloretin and does not possess glycosyltransferase activity toward naringenin, naringenin chalcone, eriodictyol, eriodictyol chalcone, apigenin, luteolin, kaempferol, quercetin, isoliquiritigenin, butein, caffeic acid, 2-coumaric acid, 3-coumaric acid, 3-hydroxybenzoic acid, 3,4-dihydroxybenzoic acid and 3,4-dihydroxyhydrocinnamic acid. Can glycosylate phloretin in the presence of UDP-glucose, UDP-xylose and UDP-galactose. The protein is Phloretin 2'-O-glucosyltransferase of Pyrus communis (Pear).